The primary structure comprises 309 residues: uncharacterized protein (309 aa).

In terms of domain architecture, Radical SAM core spans 17–254 (RYGQKVHKLT…AGEMIRHTPP (238 aa)). Residues cysteine 33, cysteine 45, and cysteine 48 each contribute to the [4Fe-4S] cluster site.

It belongs to the radical SAM superfamily. Requires [4Fe-4S] cluster as cofactor.

This is an uncharacterized protein from Escherichia coli O157:H7.